We begin with the raw amino-acid sequence, 515 residues long: Protein disulfide-isomerase (515 aa).

Positions 1–22 (MAVVRVRAIVALLCLVAALGLA) are cleaved as a signal peptide. Thioredoxin domains are found at residues 23 to 139 (EPLE…KRTG) and 351 to 480 (FLEG…SGGQ). Active-site nucleophile residues include C58, C61, C402, and C405. 2 disulfides stabilise this stretch: C58/C61 and C402/C405. A disordered region spans residues 477-515 (SGGQDGAAADDDLEDLETDEETDLEEGDDDEQKIQKDEL). A compositionally biased stretch (acidic residues) spans 484–507 (AADDDLEDLETDEETDLEEGDDDE). The Prevents secretion from ER motif lies at 512-515 (KDEL).

Belongs to the protein disulfide isomerase family. As to quaternary structure, heterodimer; heterodimerizes with the protein microsomal triglyceride transfer MTTP. Homodimer. Monomers and homotetramers may also occur. Also constitutes the structural subunit of prolyl 4-hydroxylase. Stabilizes this enzyme and retains it in the ER without contributing to the catalytic activity. Binds UBQLN1.

It is found in the endoplasmic reticulum. The protein resides in the endoplasmic reticulum lumen. Its subcellular location is the cell membrane. It carries out the reaction Catalyzes the rearrangement of -S-S- bonds in proteins.. Its function is as follows. This multifunctional protein catalyzes the formation, breakage and rearrangement of disulfide bonds. At the cell surface, seems to act as a reductase that cleaves disulfide bonds of proteins attached to the cell. May therefore cause structural modifications of exofacial proteins. Inside the cell, seems to form/rearrange disulfide bonds of nascent proteins. At high concentrations, functions as a chaperone that inhibits aggregation of misfolded proteins. At low concentrations, facilitates aggregation (anti-chaperone activity). Also acts a structural subunit of various enzymes such as prolyl 4-hydroxylase. This Gallus gallus (Chicken) protein is Protein disulfide-isomerase (P4HB).